Reading from the N-terminus, the 109-residue chain is uncharacterized protein (109 aa).

This is an uncharacterized protein from Saccharomyces cerevisiae (strain ATCC 204508 / S288c) (Baker's yeast).